The chain runs to 122 residues: S-protein homolog 23 (122 aa).

A signal peptide spans 1 to 20; it reads MQNLSILLVCSFCILGHVSS. Residue asparagine 86 is glycosylated (N-linked (GlcNAc...) asparagine).

This sequence belongs to the plant self-incompatibility (S1) protein family.

It localises to the secreted. The protein is S-protein homolog 23 of Arabidopsis thaliana (Mouse-ear cress).